The sequence spans 309 residues: Protein FdhE homolog (309 aa).

The protein belongs to the FdhE family.

Its subcellular location is the cytoplasm. Functionally, necessary for formate dehydrogenase activity. The polypeptide is Protein FdhE homolog (Yersinia pestis bv. Antiqua (strain Antiqua)).